The sequence spans 227 residues: AN1-type zinc finger protein 3 (227 aa).

An A20-type zinc finger spans residues 12-44; that stretch reads PSLPPRCPCGFWGSSKTMNLCSKCFADFQKKQP. Residues Cys18, Cys20, Cys32, and Cys35 each contribute to the Zn(2+) site. Residues 41 to 151 are disordered; that stretch reads KKQPDDDSTP…RPEESGRSKQ (111 aa). 2 stretches are compositionally biased toward low complexity: residues 49–59 and 66–77; these read TPSTSNSQSDL and SDNNNTSVTTPT. Composition is skewed to polar residues over residues 78 to 94 and 111 to 127; these read LSPS…VTSP and ITPT…SESE. A compositionally biased stretch (basic and acidic residues) spans 135-148; the sequence is RLVENPERPEESGR. The segment at 151-200 adopts an AN1-type zinc-finger fold; it reads QKSRRRCFQCQTKLELVQQELGSCRCGYVFCMLHRLPEQHDCTFDHMGRG. Zn(2+)-binding residues include Cys157, Cys160, Cys174, Cys176, Cys181, His184, His190, and Cys192.

This is AN1-type zinc finger protein 3 (Zfand3) from Rattus norvegicus (Rat).